An 89-amino-acid chain; its full sequence is Small ribosomal subunit protein uS17 (89 aa).

The protein belongs to the universal ribosomal protein uS17 family. Part of the 30S ribosomal subunit.

Its function is as follows. One of the primary rRNA binding proteins, it binds specifically to the 5'-end of 16S ribosomal RNA. This Delftia acidovorans (strain DSM 14801 / SPH-1) protein is Small ribosomal subunit protein uS17.